A 449-amino-acid chain; its full sequence is Exodeoxyribonuclease 7 large subunit (449 aa).

The protein belongs to the XseA family. Heterooligomer composed of large and small subunits.

The protein localises to the cytoplasm. It carries out the reaction Exonucleolytic cleavage in either 5'- to 3'- or 3'- to 5'-direction to yield nucleoside 5'-phosphates.. Functionally, bidirectionally degrades single-stranded DNA into large acid-insoluble oligonucleotides, which are then degraded further into small acid-soluble oligonucleotides. This Salmonella typhimurium (strain LT2 / SGSC1412 / ATCC 700720) protein is Exodeoxyribonuclease 7 large subunit.